The sequence spans 1642 residues: MGLPFLCHTRVCLFSNKIPFVLCGSRFAPATLHAHHTAAGGGETLNFPELSSPSTSKEPSVGSDSPQKKNKKQAFDALARWCGGHQQLLMRIQQSAEDTSAGVVFETPLTEVDSAAIRWLQGSTEQLTCGQSLLVCSFVCEVLYCQLNSASGGIGVEEAQRLQIHALTNRIAALLQRADESNKLESQPLSVLMSCAYVVQRLKYVDNPLFGETQRSLVKVPPSIMFALLHKLRGDGLGKLFQLDERTATDVCLSFLFIATEEHRQAFFSSGDAALVSNVLRRLVRYTASKTRRMRIQKEGDIIDLLTVDSPSDGGARQTPVCTSGTGFTSPSMRECAMIMQNVSFSSPSNRLELLLYLLCVRRNLAQCSLKDIELVPTVLSTVANIRSAEACSIRKKIISQLWLPENNPTLVAQLLVHSGESIPRYVTYLQGVPASKLSPRDAAQVILCAGTYLSYESLQLYIMAALRDIMPSSSLVTLGAETTSASVPATASVPTRVPACDSLETVLSVLLMRVEEKGGSLSEVEKDACMEYIRRLNELIDWCASAPTSSPKPALQRLTLLTKLFNRGLVVHAPETVVELAVQSLQLDPGNTMMNTLKCVSEALPLVSDDKKRSIIIEKMISYSGTRTTSSVIRFLLLLAPLVDADSPHSCELVEQLLKFHTLNPHKLRQASVEGVAKGIDVYTLLLINGIDFLLASGDWRSSPSQLQNVITTWVRDYTLYVMDPARKQKIDDGAAAHVAPATKGEKTDVVQHQQPSRLNEGGELPTLSGPNDEELEQVFTCLLRAGVKLPHAFSSELLSRIRRLQAKRNPADGTDQQVVFPLPAHFVFCCKLDVPVEVSVTPEMMKYHIDACDYRIIHCVITAFFSAAGTFKHNINDLLLCNMRLASRSFELFIQRLGEEASRSFRPATVSSVVANTLRFVVNHITKQERCQRVLRKLNEKGGIEAGEEELEGDRSLIAEHTRLGELLTRMIAYLSGAHVKNVGLSVLDRLSLLSPACGEYLMMRLSTQLSEFTQVELLYLVQKYPKSQDLVAELLGKSDLVSSMDFGDYMRVMRNLPMPINALVIGAHLPGLNFQWCTRILSSLSVRHESVPLHLLASVLRRLNDVTESATLTDRNIAFVVLQKYLQFDQTSGDGGDLEERQRLIKCSCDKLLVLSRINSLDTLKEFLVEFPEALSGVICESLSKHVVQHIVGGLLKDLDGLLTLCRLLHRHKLLTSDVKVAIVDGFFMKTLQSEVEGRANIEGESSQGLQPLNSVRGASLKTTHPVSNVLALALLLSDGPLHFPGASNSSSTICGDNERCAVSSMFQVVKESYTSPRDRLLIANTLVGQKGPNALTVVAKEICTELIENCESVTSNDFSRLLQCISRLKCWSELDLANSRFDEVFQRSCTQADAHSRCVAFRAVSFEADIFRRYESFMIPLLQETVDVMSNEDLETVLSSVLSLPFTEALESLIDAIGTRLLRMIDQCRRSALIRLLQCHAAFGIQDDALVSVCVATLTDQCGRDFRLDTAQVLALLQAAVDLDFFLPPKLVTSCFTWLEHHVENMTITQLGHAVRLAVDVEVGYTAAVHTLTLRALEQRDAIRSNASFREAVEMLCDEFSAEIPWHLRAPVLRRRYQSERLLEYLDKRRLAVDSTVA.

The N-terminal 27 residues, 1–27, are a transit peptide targeting the mitochondrion; that stretch reads MGLPFLCHTRVCLFSNKIPFVLCGSRF. Disordered stretches follow at residues 43–69 and 745–772; these read ETLNFPELSSPSTSKEPSVGSDSPQKK and KGEKTDVVQHQQPSRLNEGGELPTLSGP. Residues 49 to 65 are compositionally biased toward polar residues; sequence ELSSPSTSKEPSVGSDS.

In terms of assembly, component of the mitochondrial 3' processome (MPsome) complex composed at least of terminal uridylyltransferase KRET1/TUT1, 3'-5' exonuclease DSS1, MPSS1, MPSS2 and MPSS3. Within the complex, interacts with DSS1.

The protein localises to the mitochondrion. Its function is as follows. As part of the mitochondrial 3' processome (MPsome), involved in the maturation of guided RNA (gRNA) precursors. This chain is Mitochondrial 3' processome subunit 2, found in Trypanosoma brucei brucei.